Here is a 94-residue protein sequence, read N- to C-terminus: Co-chaperonin GroES (94 aa).

It belongs to the GroES chaperonin family. As to quaternary structure, heptamer of 7 subunits arranged in a ring. Interacts with the chaperonin GroEL.

Its subcellular location is the cytoplasm. Its function is as follows. Together with the chaperonin GroEL, plays an essential role in assisting protein folding. The GroEL-GroES system forms a nano-cage that allows encapsulation of the non-native substrate proteins and provides a physical environment optimized to promote and accelerate protein folding. GroES binds to the apical surface of the GroEL ring, thereby capping the opening of the GroEL channel. The sequence is that of Co-chaperonin GroES from Clostridium botulinum (strain Eklund 17B / Type B).